The chain runs to 329 residues: uncharacterized protein (329 aa).

2 coiled-coil regions span residues 57 to 120 and 225 to 251; these read KKEE…QEVT and QRQR…GNMM.

This is an uncharacterized protein from Homo sapiens (Human).